Here is a 79-residue protein sequence, read N- to C-terminus: Small ribosomal subunit protein uS17 (79 aa).

This sequence belongs to the universal ribosomal protein uS17 family. As to quaternary structure, part of the 30S ribosomal subunit.

Functionally, one of the primary rRNA binding proteins, it binds specifically to the 5'-end of 16S ribosomal RNA. The chain is Small ribosomal subunit protein uS17 from Rhizobium rhizogenes (strain K84 / ATCC BAA-868) (Agrobacterium radiobacter).